The following is an 88-amino-acid chain: Large ribosomal subunit protein bL31B (88 aa).

The protein belongs to the bacterial ribosomal protein bL31 family. Type B subfamily. As to quaternary structure, part of the 50S ribosomal subunit.

The chain is Large ribosomal subunit protein bL31B from Corynebacterium efficiens (strain DSM 44549 / YS-314 / AJ 12310 / JCM 11189 / NBRC 100395).